The following is a 159-amino-acid chain: Calcium-binding protein CML39 (159 aa).

EF-hand domains follow at residues 18-53 (EKNR…LGEQ), 54-89 (MSDE…NDEF), 93-128 (EKKR…LGES), and 129-159 (RTTD…LMMR). The Ca(2+) site is built by aspartate 31, asparagine 33, aspartate 35, arginine 37, glutamate 42, aspartate 67, aspartate 69, aspartate 71, methionine 73, and glutamate 78. 4 residues coordinate Ca(2+): aspartate 142, asparagine 144, aspartate 146, and glutamate 153.

In terms of tissue distribution, expressed in the zones of elongation and differentiation in seedling roots and at the root-hypocotyl junction. Expressed from stage 12 of flower development in anthers, specifically in pollen.

Functionally, potential calcium sensor that binds calcium in vitro. The sequence is that of Calcium-binding protein CML39 (CML39) from Arabidopsis thaliana (Mouse-ear cress).